A 250-amino-acid chain; its full sequence is ATP synthase subunit a (250 aa).

6 consecutive transmembrane segments (helical) span residues 29 to 49, 84 to 104, 114 to 134, 143 to 163, 193 to 213, and 216 to 236; these read ASLFMAASAAVAVGFLYFATS, FFPLVFSLFMFVLTANLLGMF, IIVTFALAILVIGTVLVYGFY, VFVPSGVPGILLPLVVAIEII, FVASLGALGAVGVGGAVLPLI, and VALTGLEFLVAFLQAYVFAVL.

This sequence belongs to the ATPase A chain family. In terms of assembly, F-type ATPases have 2 components, CF(1) - the catalytic core - and CF(0) - the membrane proton channel. CF(1) has five subunits: alpha(3), beta(3), gamma(1), delta(1), epsilon(1). CF(0) has three main subunits: a(1), b(2) and c(9-12). The alpha and beta chains form an alternating ring which encloses part of the gamma chain. CF(1) is attached to CF(0) by a central stalk formed by the gamma and epsilon chains, while a peripheral stalk is formed by the delta and b chains.

It is found in the cell inner membrane. Its function is as follows. Key component of the proton channel; it plays a direct role in the translocation of protons across the membrane. This Rhizobium etli (strain CIAT 652) protein is ATP synthase subunit a.